Consider the following 416-residue polypeptide: Serine protease inhibitor A3K (416 aa).

The first 20 residues, 1-20, serve as a signal peptide directing secretion; it reads MAFIAALGLLMAGICPAVLC. N-linked (GlcNAc...) asparagine glycans are attached at residues Asn102, Asn182, Asn220, and Asn267. The RCL stretch occupies residues 365 to 392; it reads GTEGAAATAVTAALKSLPQTIPLLNFNR.

It belongs to the serpin family. Post-translationally, N-glycosylated. Liver and plasma.

The protein localises to the secreted. Binds to and inhibits kallikreins. Inhibits trypsin but not chymotrypsin or elastase. The protein is Serine protease inhibitor A3K (Serpina3k) of Rattus norvegicus (Rat).